The following is a 473-amino-acid chain: Siroheme synthase (473 aa).

The segment at 1-206 (MDYLPIFMKI…GNTGEAEALL (206 aa)) is precorrin-2 dehydrogenase /sirohydrochlorin ferrochelatase. NAD(+)-binding positions include 22–23 (TV) and 43–44 (PK). Residues 223 to 473 (GEVYIIGAGP…KSLLDDRVPA (251 aa)) are uroporphyrinogen-III C-methyltransferase. Proline 232 is an S-adenosyl-L-methionine binding site. The active-site Proton acceptor is aspartate 255. Lysine 277 serves as the catalytic Proton donor. S-adenosyl-L-methionine contacts are provided by residues 308-310 (GGD), isoleucine 313, 338-339 (TA), methionine 390, and glycine 419.

This sequence in the N-terminal section; belongs to the precorrin-2 dehydrogenase / sirohydrochlorin ferrochelatase family. The protein in the C-terminal section; belongs to the precorrin methyltransferase family.

The enzyme catalyses uroporphyrinogen III + 2 S-adenosyl-L-methionine = precorrin-2 + 2 S-adenosyl-L-homocysteine + H(+). It carries out the reaction precorrin-2 + NAD(+) = sirohydrochlorin + NADH + 2 H(+). The catalysed reaction is siroheme + 2 H(+) = sirohydrochlorin + Fe(2+). The protein operates within cofactor biosynthesis; adenosylcobalamin biosynthesis; precorrin-2 from uroporphyrinogen III: step 1/1. It functions in the pathway cofactor biosynthesis; adenosylcobalamin biosynthesis; sirohydrochlorin from precorrin-2: step 1/1. It participates in porphyrin-containing compound metabolism; siroheme biosynthesis; precorrin-2 from uroporphyrinogen III: step 1/1. Its pathway is porphyrin-containing compound metabolism; siroheme biosynthesis; siroheme from sirohydrochlorin: step 1/1. The protein operates within porphyrin-containing compound metabolism; siroheme biosynthesis; sirohydrochlorin from precorrin-2: step 1/1. Functionally, multifunctional enzyme that catalyzes the SAM-dependent methylations of uroporphyrinogen III at position C-2 and C-7 to form precorrin-2 via precorrin-1. Then it catalyzes the NAD-dependent ring dehydrogenation of precorrin-2 to yield sirohydrochlorin. Finally, it catalyzes the ferrochelation of sirohydrochlorin to yield siroheme. This chain is Siroheme synthase, found in Hydrogenovibrio crunogenus (strain DSM 25203 / XCL-2) (Thiomicrospira crunogena).